The sequence spans 678 residues: ATP-dependent RNA helicase DHX58 (678 aa).

One can recognise a Helicase ATP-binding domain in the interval 11 to 188 (IMPALEGKNI…DGAINHVLQL (178 aa)). 24 to 31 (LPTGAGKT) contacts ATP. Residues 131–134 (DECH) carry the DECH box motif. Residues 350 to 514 (KLEMLEKILQ…QAVAAVQKMD (165 aa)) form the Helicase C-terminal domain. The stretch at 489–546 (ELKRELINEALETLMEQAVAAVQKMDQAEYQAKIRDLQQAALTKRAAQAAQRENQRQQ) forms a coiled coil. Residues 539 to 669 (QRENQRQQFP…PDFDFLQHCA (131 aa)) form the RLR CTR domain. 4 residues coordinate Zn(2+): C556, C559, C612, and C615. The RNA-binding stretch occupies residues 572–655 (VEGTHHVNVN…RIQAKKWSRV (84 aa)).

The protein belongs to the helicase family. RLR subfamily. In terms of assembly, monomer in the absence of dsRNA. Homodimer in the presence of dsRNA. Interacts with RIGI (via CARD domain), MAVS/IPS1 and DDX60. Found in a complex with RIGI and IFIH1/MDA5. Interacts with ANKRD17. Directly interacts with ATG5 and ATG12, either as ATG5 and ATG12 monomers or as ATG12-ATG5 conjugates. As to quaternary structure, (Microbial infection) Interacts (via helicase C-terminal domain) with non-structural protein V of paramyxoviruses including human parainfluenza 2 virus, human parainfluenza 5 virus, measles virus, mumps virus, hendra virus and nipah virus. As to expression, expressed in testis, nerve and spleen. Also expressed in the brain.

The protein localises to the cytoplasm. It carries out the reaction ATP + H2O = ADP + phosphate + H(+). In terms of biological role, acts as a regulator of RIGI and IFIH1/MDA5 mediated antiviral signaling. Cannot initiate antiviral signaling as it lacks the CARD domain required for activating MAVS/IPS1-dependent signaling events. Can have both negative and positive regulatory functions related to RIGI and IFIH1/MDA5 signaling and this role in regulating signaling may be complex and could probably depend on characteristics of the infecting virus or target cells, or both. Its inhibitory action on RIG-I signaling may involve the following mechanisms: competition with RIGI for binding to the viral RNA, binding to RIGI and inhibiting its dimerization and interaction with MAVS/IPS1, competing with IKBKE in its binding to MAVS/IPS1 thereby inhibiting activation of interferon regulatory factor 3 (IRF3). Its positive regulatory role may involve unwinding or stripping nucleoproteins of viral RNA thereby facilitating their recognition by RIGI and IFIH1/MDA5. Involved in the innate immune response to various RNA viruses and some DNA viruses such as poxviruses and coronavirus SARS-CoV-2, and also to the bacterial pathogen Listeria monocytogenes. Can bind both ssRNA and dsRNA, with a higher affinity for dsRNA. Shows a preference to 5'-triphosphorylated RNA, although it can recognize RNA lacking a 5'-triphosphate. The sequence is that of ATP-dependent RNA helicase DHX58 from Homo sapiens (Human).